The primary structure comprises 134 residues: Large ribosomal subunit protein uL14 (134 aa).

Belongs to the universal ribosomal protein uL14 family. As to quaternary structure, in the 70S ribosome, L14 and L19 interact and together make contacts with the 16S rRNA in bridges B5 and B8. Part of the 50S ribosomal subunit. Forms a cluster with proteins L3 and L19.

Functionally, forms part of two intersubunit bridges in the 70S ribosome. Binds to 23S rRNA. This is Large ribosomal subunit protein uL14 from Deinococcus radiodurans (strain ATCC 13939 / DSM 20539 / JCM 16871 / CCUG 27074 / LMG 4051 / NBRC 15346 / NCIMB 9279 / VKM B-1422 / R1).